Reading from the N-terminus, the 172-residue chain is UPF0114 protein PMI3225 (172 aa).

A run of 4 helical transmembrane segments spans residues 15–35, 57–77, 108–128, and 136–156; these read LFAPVYIGLSLGLLALTIKFF, LLSLIDLALVGGLLIMVIFSG, KVAASIVAISSIHLLGVFMDL, and LLWYVVLHLTFVFSAFVMGYL.

It belongs to the UPF0114 family.

The protein localises to the cell membrane. The protein is UPF0114 protein PMI3225 of Proteus mirabilis (strain HI4320).